A 519-amino-acid polypeptide reads, in one-letter code: Na(+)/H(+) exchange regulatory cofactor NHE-RF3 (519 aa).

The PDZ 1 domain occupies 9-90 (ECKLSKQEGQ…SVTLLVLDGD (82 aa)). Phosphoserine is present on residues S108, S148, S192, S250, S334, and S348. 2 consecutive PDZ domains span residues 128–215 (EPCA…VDKE) and 243–323 (VVVI…LDKE). Residues 348 to 374 (SVKEGPAPIPAPLEATGSEPTEDAEGH) are disordered. In terms of domain architecture, PDZ 4 spans 378–458 (LCRLLKEDDS…HVTLLVCGKM (81 aa)). 2 positions are modified to phosphothreonine: T451 and T488. Residues 479–519 (VAGPDEKGETSAESEHDAHPAKDRTLSTASHSSSNSEDTEM) are disordered. Basic and acidic residues predominate over residues 482-503 (PDEKGETSAESEHDAHPAKDRT). Phosphoserine occurs at positions 489 and 492. T503 bears the Phosphothreonine mark. Low complexity predominate over residues 505–519 (STASHSSSNSEDTEM). Phosphoserine occurs at positions 508, 510, 511, 512, and 514.

It belongs to the NHER family. Interacts with PDZK1IP1 and ABCC2. Binds to the C-terminal region of SLC26A3. Interacts (via C-terminal PDZ domain) with SLC26A6 (via C-terminal domain). Interacts (via C-terminal PDZ domain) with SLC9A3 (via C-terminal domain). Component of a complex, composed of PDZK1, SYNGAP1, KLHL17 and NMDA receptors. Interacts (via PDZ1 domain) directly with KLHL17; the interaction is important for integrity of actin cytoskeleton structures in neurons. Forms a heterodimeric complex with NHERF1. Interacts with AKAP2, BCR, CFTR, SLCO1A1, SLC22A12, SLC22A4, SLC22A5, SLC26A6, NHERF2 and SLC17A1. Interacts (via the first PDZ domain) with PTGIR (via non-isoprenylated C-terminus). Interacts (via PDZ domains 1 and 3) with SCARB1 (C-terminal domain). Interacts (via PDZ domains 1 and 3) with SLC5A8 (via PDZ-binding motif); interaction increases nicotinate transport activity of SLC5A8. In terms of tissue distribution, expressed in kidney, liver, small intestine. brain, lung, and testis (at protein level).

The protein localises to the membrane. It is found in the cell membrane. Functionally, a scaffold protein that connects plasma membrane proteins and regulatory components, regulating their surface expression in epithelial cells apical domains. May be involved in the coordination of a diverse range of regulatory processes for ion transport and second messenger cascades. In complex with NHERF1, may cluster proteins that are functionally dependent in a mutual fashion and modulate the trafficking and the activity of the associated membrane proteins. May play a role in the cellular mechanisms associated with multidrug resistance through its interaction with ABCC2 and PDZK1IP1. May potentiate the CFTR chloride channel activity. Required for normal cell-surface expression of SCARB1. Plays a role in maintaining normal plasma cholesterol levels via its effects on SCARB1. Plays a role in the normal localization and function of the chloride-anion exchanger SLC26A6 to the plasma membrane in the brush border of the proximal tubule of the kidney. May be involved in the regulation of proximal tubular Na(+)-dependent inorganic phosphate cotransport therefore playing an important role in tubule function. The polypeptide is Na(+)/H(+) exchange regulatory cofactor NHE-RF3 (Pdzk1) (Mus musculus (Mouse)).